A 195-amino-acid chain; its full sequence is Dephospho-CoA kinase (195 aa).

Positions 3 to 195 constitute a DPCK domain; the sequence is KIGLTGGIGS…ANMKNVIAEI (193 aa). An ATP-binding site is contributed by 11 to 16; it reads GSGKST.

It belongs to the CoaE family.

The protein resides in the cytoplasm. The catalysed reaction is 3'-dephospho-CoA + ATP = ADP + CoA + H(+). The protein operates within cofactor biosynthesis; coenzyme A biosynthesis; CoA from (R)-pantothenate: step 5/5. Catalyzes the phosphorylation of the 3'-hydroxyl group of dephosphocoenzyme A to form coenzyme A. The protein is Dephospho-CoA kinase of Corynebacterium glutamicum (Brevibacterium saccharolyticum).